We begin with the raw amino-acid sequence, 418 residues long: Sprouty-related, EVH1 domain-containing protein 2 (418 aa).

The WH1 domain occupies Thr5 to Leu122. The disordered stretch occupies residues Thr127–Ser171. Residues Thr146–Ser156 are compositionally biased toward polar residues. One can recognise a KBD domain in the interval Pro201–Gly257. Ser206 carries the post-translational modification Phosphoserine. 2 positions are modified to phosphotyrosine: Tyr228 and Tyr231. A disordered region spans residues Gly275–Glu302. The SPR domain maps to Arg308–Ala416.

In terms of assembly, homodimer and heterodimer. Able to interact with SPRED1 to form heterodimers. Interacts with RAS. May interact with ZDHHC13 (via ANK repeats) and ZDHHC17 (via ANK repeats). Interacts with TESK1. Interacts with NF1. Phosphorylated on serine and threonine residues. Phosphorylated on tyrosine. Phosphorylation of Tyr-228 and Tyr-231 are required for ubiquitination. Post-translationally, ubiquitinated; leading to degradation by the proteasome. In terms of tissue distribution, expressed in liver, skin, small intestine, salivary gland and prostate.

Its subcellular location is the cell membrane. It is found in the cytoplasmic vesicle. The protein localises to the secretory vesicle membrane. It localises to the cytoplasm. Functionally, negatively regulates Ras signaling pathways and downstream activation of MAP kinases. Recruits and translocates NF1 to the cell membrane, thereby enabling NF1-dependent hydrolysis of active GTP-bound Ras to inactive GDP-bound Ras. Inhibits fibroblast growth factor (FGF)-induced retinal lens fiber differentiation, probably by inhibiting FGF-mediated phosphorylation of ERK1/2. Inhibits TGFB-induced epithelial-to-mesenchymal transition in lens epithelial cells. This Homo sapiens (Human) protein is Sprouty-related, EVH1 domain-containing protein 2 (SPRED2).